A 500-amino-acid polypeptide reads, in one-letter code: Bifunctional protein GlmU (500 aa).

The tract at residues 1–242 (MPVQTAVVVL…SAKVAGANDR (242 aa)) is pyrophosphorylase. UDP-N-acetyl-alpha-D-glucosamine contacts are provided by residues 10–13 (LAAG), Lys-24, Gln-81, and 86–87 (GT). Asp-112 provides a ligand contact to Mg(2+). UDP-N-acetyl-alpha-D-glucosamine is bound by residues Gly-151, Glu-167, Asn-182, and Asn-240. Asn-240 lines the Mg(2+) pocket. The tract at residues 243–263 (VQLSRLAAELNRRTVENWMRA) is linker. An N-acetyltransferase region spans residues 264–500 (GVTVVDPSTT…KQDLKDGIEQ (237 aa)). Positions 345 and 363 each coordinate UDP-N-acetyl-alpha-D-glucosamine. Residue His-375 is the Proton acceptor of the active site. UDP-N-acetyl-alpha-D-glucosamine contacts are provided by Tyr-378 and Asn-389. Residues Ala-392, 398–399 (NY), Ser-417, and Ala-435 contribute to the acetyl-CoA site. The segment at 472-500 (AEAAAAAGLHHSSDLHETEKQDLKDGIEQ) is disordered. Residues 482 to 500 (HSSDLHETEKQDLKDGIEQ) show a composition bias toward basic and acidic residues.

This sequence in the N-terminal section; belongs to the N-acetylglucosamine-1-phosphate uridyltransferase family. The protein in the C-terminal section; belongs to the transferase hexapeptide repeat family. As to quaternary structure, homotrimer. Mg(2+) serves as cofactor.

The protein localises to the cytoplasm. The catalysed reaction is alpha-D-glucosamine 1-phosphate + acetyl-CoA = N-acetyl-alpha-D-glucosamine 1-phosphate + CoA + H(+). It carries out the reaction N-acetyl-alpha-D-glucosamine 1-phosphate + UTP + H(+) = UDP-N-acetyl-alpha-D-glucosamine + diphosphate. The protein operates within nucleotide-sugar biosynthesis; UDP-N-acetyl-alpha-D-glucosamine biosynthesis; N-acetyl-alpha-D-glucosamine 1-phosphate from alpha-D-glucosamine 6-phosphate (route II): step 2/2. It participates in nucleotide-sugar biosynthesis; UDP-N-acetyl-alpha-D-glucosamine biosynthesis; UDP-N-acetyl-alpha-D-glucosamine from N-acetyl-alpha-D-glucosamine 1-phosphate: step 1/1. It functions in the pathway bacterial outer membrane biogenesis; LPS lipid A biosynthesis. Its function is as follows. Catalyzes the last two sequential reactions in the de novo biosynthetic pathway for UDP-N-acetylglucosamine (UDP-GlcNAc). The C-terminal domain catalyzes the transfer of acetyl group from acetyl coenzyme A to glucosamine-1-phosphate (GlcN-1-P) to produce N-acetylglucosamine-1-phosphate (GlcNAc-1-P), which is converted into UDP-GlcNAc by the transfer of uridine 5-monophosphate (from uridine 5-triphosphate), a reaction catalyzed by the N-terminal domain. This is Bifunctional protein GlmU from Rhodococcus jostii (strain RHA1).